A 122-amino-acid polypeptide reads, in one-letter code: Large ribosomal subunit protein uL14c (122 aa).

The protein belongs to the universal ribosomal protein uL14 family. Part of the 50S ribosomal subunit.

It is found in the plastid. The protein localises to the chloroplast. In terms of biological role, binds to 23S rRNA. This chain is Large ribosomal subunit protein uL14c, found in Capsella bursa-pastoris (Shepherd's purse).